Here is a 120-residue protein sequence, read N- to C-terminus: Small ribosomal subunit protein uS12c (120 aa).

It belongs to the universal ribosomal protein uS12 family. In terms of assembly, part of the 30S ribosomal subunit.

The protein resides in the plastid. It localises to the apicoplast. Functionally, with S4 and S5 plays an important role in translational accuracy. Located at the interface of the 30S and 50S subunits. The polypeptide is Small ribosomal subunit protein uS12c (rps12) (Eimeria tenella (Coccidian parasite)).